The following is a 99-amino-acid chain: DNA-binding protein Fis (99 aa).

The segment at residues 75–94 is a DNA-binding region (H-T-H motif); sequence QTRAALMLGVNRGTLRKKLK.

The protein belongs to the transcriptional regulatory Fis family. As to quaternary structure, homodimer.

Functionally, activates ribosomal RNA transcription. Plays a direct role in upstream activation of rRNA promoters. The polypeptide is DNA-binding protein Fis (Actinobacillus succinogenes (strain ATCC 55618 / DSM 22257 / CCUG 43843 / 130Z)).